The chain runs to 247 residues: Calpain small subunit 2 (247 aa).

The Ca(2+) site is built by Ala88, Asp91, Glu93, Asp131, Asp133, Thr135, Lys137, Glu142, Asp161, Asp163, Ser165, and Asp204. EF-hand domains lie at 118-151 (FSLDTCRSIVSVMDSDTTGKLGFEEFKYLWNNIK), 148-183 (NNIKKWQCVFKQYDSDHSGSLGSSQLHGAMQAAGFQ), 184-212 (LNEQLYLMIVRRYADEDGGMDFNNFISCL), and 213-247 (VRLDAMFRAFKALDRDRDGLIQVSIREWLQLTMYS).

In terms of assembly, heterodimer of a large (catalytic) and a small (regulatory) subunit.

It is found in the cytoplasm. Its subcellular location is the cell membrane. In terms of biological role, calcium-regulated non-lysosomal thiol-protease which catalyzes limited proteolysis of substrates involved in cytoskeletal remodeling and signal transduction. This small subunit may act as a tissue-specific chaperone of the large subunit, possibly by helping it fold into its correct conformation for activity. The sequence is that of Calpain small subunit 2 (Capns2) from Mus musculus (Mouse).